The following is a 675-amino-acid chain: DNA ligase (675 aa).

NAD(+) is bound by residues 35–39 (DAVYD), 84–85 (SL), and Glu118. The active-site N6-AMP-lysine intermediate is Lys120. The NAD(+) site is built by Arg141, Glu178, Lys295, and Lys319. Positions 413, 416, 431, and 436 each coordinate Zn(2+). Positions 598 to 675 (GAIGALTGQT…DEAELKALLS (78 aa)) constitute a BRCT domain.

The protein belongs to the NAD-dependent DNA ligase family. LigA subfamily. Mg(2+) is required as a cofactor. It depends on Mn(2+) as a cofactor.

The catalysed reaction is NAD(+) + (deoxyribonucleotide)n-3'-hydroxyl + 5'-phospho-(deoxyribonucleotide)m = (deoxyribonucleotide)n+m + AMP + beta-nicotinamide D-nucleotide.. Functionally, DNA ligase that catalyzes the formation of phosphodiester linkages between 5'-phosphoryl and 3'-hydroxyl groups in double-stranded DNA using NAD as a coenzyme and as the energy source for the reaction. It is essential for DNA replication and repair of damaged DNA. This is DNA ligase from Synechococcus sp. (strain RCC307).